Reading from the N-terminus, the 758-residue chain is 5-methyltetrahydropteroyltriglutamate--homocysteine methyltransferase (758 aa).

Residues 15 to 18 and lysine 114 each bind 5-methyltetrahydropteroyltri-L-glutamate; that span reads RELK. Residues 433 to 435 and glutamate 486 each bind L-homocysteine; that span reads IGS. L-methionine is bound by residues 433–435 and glutamate 486; that span reads IGS. 5-methyltetrahydropteroyltri-L-glutamate contacts are provided by residues 517-518 and tryptophan 563; that span reads RC. Residue aspartate 601 coordinates L-homocysteine. Aspartate 601 provides a ligand contact to L-methionine. Glutamate 607 is a 5-methyltetrahydropteroyltri-L-glutamate binding site. Zn(2+) contacts are provided by histidine 643, cysteine 645, and glutamate 667. Histidine 696 (proton donor) is an active-site residue. Residue cysteine 728 coordinates Zn(2+).

The protein belongs to the vitamin-B12 independent methionine synthase family. Zn(2+) serves as cofactor.

It catalyses the reaction 5-methyltetrahydropteroyltri-L-glutamate + L-homocysteine = tetrahydropteroyltri-L-glutamate + L-methionine. It functions in the pathway amino-acid biosynthesis; L-methionine biosynthesis via de novo pathway; L-methionine from L-homocysteine (MetE route): step 1/1. Functionally, catalyzes the transfer of a methyl group from 5-methyltetrahydrofolate to homocysteine resulting in methionine formation. This is 5-methyltetrahydropteroyltriglutamate--homocysteine methyltransferase from Syntrophotalea carbinolica (strain DSM 2380 / NBRC 103641 / GraBd1) (Pelobacter carbinolicus).